Here is a 304-residue protein sequence, read N- to C-terminus: Phosphonates import ATP-binding protein PhnC 1 (304 aa).

An ABC transporter domain is found at 4 to 240 (VSLQNVTKLF…VIDDLYYAGS (237 aa)). 37–44 (GPSGAGKS) serves as a coordination point for ATP. Residues 240–304 (SESTPVSHGD…TETDTGEAQL (65 aa)) form a disordered region. Over residues 263–272 (TSVSSDMETT) the composition is skewed to polar residues. The span at 289–304 (TDTETDTETDTGEAQL) shows a compositional bias: acidic residues.

Belongs to the ABC transporter superfamily. Phosphonates importer (TC 3.A.1.9.1) family. The complex is composed of two ATP-binding proteins (PhnC), two transmembrane proteins (PhnE) and a solute-binding protein (PhnD).

It is found in the cell membrane. It carries out the reaction phosphonate(out) + ATP + H2O = phosphonate(in) + ADP + phosphate + H(+). Functionally, part of the ABC transporter complex PhnCDE involved in phosphonates import. Responsible for energy coupling to the transport system. In Haloquadratum walsbyi (strain DSM 16790 / HBSQ001), this protein is Phosphonates import ATP-binding protein PhnC 1.